We begin with the raw amino-acid sequence, 420 residues long: uncharacterized protein (420 aa).

The region spanning 79–420 is the YcaO domain; sequence GKGIDNEAAM…AVNTIRGAES (342 aa).

This is an uncharacterized protein from Rhizobium leguminosarum bv. trifolii.